We begin with the raw amino-acid sequence, 707 residues long: SPX domain-containing membrane protein At4g11810 (707 aa).

The 144-residue stretch at V2–K145 folds into the SPX domain. Transmembrane regions (helical) follow at residues F252–I272, L283–F303, L320–F340, S342–V361, A380–L400, and L416–F436. The segment covering E481–S498 has biased composition (acidic residues). The tract at residues E481–K503 is disordered. The next 5 membrane-spanning stretches (helical) occupy residues L523 to V543, I557 to I577, I586 to I606, V614 to L634, and M679 to T699.

This sequence belongs to the major facilitator superfamily.

The protein localises to the membrane. The chain is SPX domain-containing membrane protein At4g11810 from Arabidopsis thaliana (Mouse-ear cress).